Consider the following 184-residue polypeptide: Ribosome-recycling factor (184 aa).

It belongs to the RRF family.

Its subcellular location is the cytoplasm. Responsible for the release of ribosomes from messenger RNA at the termination of protein biosynthesis. May increase the efficiency of translation by recycling ribosomes from one round of translation to another. The protein is Ribosome-recycling factor of Acinetobacter baylyi (strain ATCC 33305 / BD413 / ADP1).